Consider the following 144-residue polypeptide: Large ribosomal subunit protein uL22 (144 aa).

The segment at 123-144 is disordered; the sequence is ELVKKRTMGHKKEKAKQKQKQQ. Over residues 125–144 the composition is skewed to basic residues; it reads VKKRTMGHKKEKAKQKQKQQ.

Belongs to the universal ribosomal protein uL22 family. As to quaternary structure, part of the 50S ribosomal subunit.

This protein binds specifically to 23S rRNA; its binding is stimulated by other ribosomal proteins, e.g. L4, L17, and L20. It is important during the early stages of 50S assembly. It makes multiple contacts with different domains of the 23S rRNA in the assembled 50S subunit and ribosome. Functionally, the globular domain of the protein is located near the polypeptide exit tunnel on the outside of the subunit, while an extended beta-hairpin is found that lines the wall of the exit tunnel in the center of the 70S ribosome. This chain is Large ribosomal subunit protein uL22, found in Mycoplasma genitalium (strain ATCC 33530 / DSM 19775 / NCTC 10195 / G37) (Mycoplasmoides genitalium).